The following is a 310-amino-acid chain: Porphobilinogen deaminase (310 aa).

The residue at position 242 (cysteine 242) is an S-(dipyrrolylmethanemethyl)cysteine.

Belongs to the HMBS family. Monomer. Requires dipyrromethane as cofactor.

The catalysed reaction is 4 porphobilinogen + H2O = hydroxymethylbilane + 4 NH4(+). The protein operates within porphyrin-containing compound metabolism; protoporphyrin-IX biosynthesis; coproporphyrinogen-III from 5-aminolevulinate: step 2/4. Functionally, tetrapolymerization of the monopyrrole PBG into the hydroxymethylbilane pre-uroporphyrinogen in several discrete steps. The chain is Porphobilinogen deaminase from Shewanella baltica (strain OS223).